The chain runs to 457 residues: Argininosuccinate lyase (457 aa).

Belongs to the lyase 1 family. Argininosuccinate lyase subfamily.

It localises to the cytoplasm. The catalysed reaction is 2-(N(omega)-L-arginino)succinate = fumarate + L-arginine. Its pathway is amino-acid biosynthesis; L-arginine biosynthesis; L-arginine from L-ornithine and carbamoyl phosphate: step 3/3. This is Argininosuccinate lyase from Haemophilus influenzae (strain 86-028NP).